Here is a 156-residue protein sequence, read N- to C-terminus: Ribosomal RNA large subunit methyltransferase H (156 aa).

S-adenosyl-L-methionine-binding positions include Leu-73, Gly-104, and 123–128 (IGPLTL).

The protein belongs to the RNA methyltransferase RlmH family. Homodimer.

The protein localises to the cytoplasm. The catalysed reaction is pseudouridine(1915) in 23S rRNA + S-adenosyl-L-methionine = N(3)-methylpseudouridine(1915) in 23S rRNA + S-adenosyl-L-homocysteine + H(+). In terms of biological role, specifically methylates the pseudouridine at position 1915 (m3Psi1915) in 23S rRNA. The chain is Ribosomal RNA large subunit methyltransferase H from Stenotrophomonas maltophilia (strain R551-3).